The sequence spans 531 residues: Light-independent protochlorophyllide reductase subunit B (531 aa).

[4Fe-4S] cluster is bound at residue D36. D296 (proton donor) is an active-site residue. 431 to 432 lines the substrate pocket; it reads GM.

The protein belongs to the ChlB/BchB/BchZ family. As to quaternary structure, protochlorophyllide reductase is composed of three subunits; ChlL, ChlN and ChlB. Forms a heterotetramer of two ChlB and two ChlN subunits. [4Fe-4S] cluster is required as a cofactor.

The protein localises to the plastid. Its subcellular location is the chloroplast. The enzyme catalyses chlorophyllide a + oxidized 2[4Fe-4S]-[ferredoxin] + 2 ADP + 2 phosphate = protochlorophyllide a + reduced 2[4Fe-4S]-[ferredoxin] + 2 ATP + 2 H2O. It functions in the pathway porphyrin-containing compound metabolism; chlorophyll biosynthesis (light-independent). In terms of biological role, component of the dark-operative protochlorophyllide reductase (DPOR) that uses Mg-ATP and reduced ferredoxin to reduce ring D of protochlorophyllide (Pchlide) to form chlorophyllide a (Chlide). This reaction is light-independent. The NB-protein (ChlN-ChlB) is the catalytic component of the complex. In Nephroselmis olivacea (Green alga), this protein is Light-independent protochlorophyllide reductase subunit B.